A 390-amino-acid chain; its full sequence is MKFVDEATILVVAGDGGNGCVSFRREKYIPNGGPDGGDGGDGGDIYLLADENLNTLIDYRFVKSFRAERGENGQSRDCTGKRGKDITIKVPVGTRVLDQGTGEIVGDMTRHGQRLMVAKGGFHGLGNTRFKSSVNRAPRQKTMGTEGETRELMLELLLLADVGMLGLPNAGKSTFIRAVSAAKPKVADYPFTTLIPSLGVVRMDHEQSFVVADIPGLIEGASDGAGLGIRFLKHLERCRVLLHLVDLAPIDESDPVENAKIIINELQQYSENLAQKPRWLVFNKIDLVGPEEAEVRAKAIVEALGWEGKYYMISAANRDNVNALCWDVMNFLNSQPKAMAIAESAPEKVEFMWDDYHREQLAEVEAEAESEDDDDWDEEDDDGVEFIYER.

In terms of domain architecture, Obg spans Met-1–Leu-159. In terms of domain architecture, OBG-type G spans Ala-160–Asn-333. GTP-binding positions include Gly-166–Ser-173, Phe-191–Ile-195, Asp-213–Gly-216, Asn-283–Asp-286, and Ser-314–Ala-316. Residues Ser-173 and Thr-193 each coordinate Mg(2+). Acidic residues predominate over residues Glu-363–Val-384. The segment at Glu-363–Arg-390 is disordered.

It belongs to the TRAFAC class OBG-HflX-like GTPase superfamily. OBG GTPase family. In terms of assembly, monomer. Mg(2+) serves as cofactor.

The protein resides in the cytoplasm. Its function is as follows. An essential GTPase which binds GTP, GDP and possibly (p)ppGpp with moderate affinity, with high nucleotide exchange rates and a fairly low GTP hydrolysis rate. Plays a role in control of the cell cycle, stress response, ribosome biogenesis and in those bacteria that undergo differentiation, in morphogenesis control. This Yersinia enterocolitica serotype O:8 / biotype 1B (strain NCTC 13174 / 8081) protein is GTPase Obg.